The following is a 462-amino-acid chain: tRNA(Ile)-lysidine synthase (462 aa).

Position 26–31 (26–31) interacts with ATP; that stretch reads SGGVDS.

The protein belongs to the tRNA(Ile)-lysidine synthase family.

The protein localises to the cytoplasm. It carries out the reaction cytidine(34) in tRNA(Ile2) + L-lysine + ATP = lysidine(34) in tRNA(Ile2) + AMP + diphosphate + H(+). Its function is as follows. Ligates lysine onto the cytidine present at position 34 of the AUA codon-specific tRNA(Ile) that contains the anticodon CAU, in an ATP-dependent manner. Cytidine is converted to lysidine, thus changing the amino acid specificity of the tRNA from methionine to isoleucine. The protein is tRNA(Ile)-lysidine synthase of Enterococcus faecalis (strain ATCC 700802 / V583).